The primary structure comprises 155 residues: Small ribosomal subunit protein uS7cz/uS7cy (155 aa).

Belongs to the universal ribosomal protein uS7 family. In terms of assembly, part of the 30S ribosomal subunit.

The protein localises to the plastid. It is found in the chloroplast. Its function is as follows. One of the primary rRNA binding proteins, it binds directly to 16S rRNA where it nucleates assembly of the head domain of the 30S subunit. The sequence is that of Small ribosomal subunit protein uS7cz/uS7cy (rps7-A) from Guizotia abyssinica (Niger).